The primary structure comprises 329 residues: ATP-dependent (S)-NAD(P)H-hydrate dehydratase (329 aa).

The YjeF C-terminal domain maps to Thr35–Leu326. Tyr67 bears the Phosphotyrosine mark. (6S)-NADPHX is bound by residues Gly135 and Asn188–Arg194. N-linked (GlcNAc...) asparagine glycosylation is found at Asn207 and Asn222. ATP-binding positions include Lys228–Asp232 and Gly247–Gly256. (6S)-NADPHX is bound at residue Asp257. A glycan (N-linked (GlcNAc...) asparagine) is linked at Asn279.

Belongs to the NnrD/CARKD family. The cofactor is Mg(2+).

The protein localises to the mitochondrion. It carries out the reaction (6S)-NADHX + ATP = ADP + phosphate + NADH + H(+). The enzyme catalyses (6S)-NADPHX + ATP = ADP + phosphate + NADPH + H(+). In terms of biological role, catalyzes the dehydration of the S-form of NAD(P)HX at the expense of ATP, which is converted to ADP. Together with NAD(P)HX epimerase, which catalyzes the epimerization of the S- and R-forms, the enzyme allows the repair of both epimers of NAD(P)HX, a damaged form of NAD(P)H that is a result of enzymatic or heat-dependent hydration. The chain is ATP-dependent (S)-NAD(P)H-hydrate dehydratase from Pongo abelii (Sumatran orangutan).